The primary structure comprises 1009 residues: Protein-tyrosine kinase 2-beta (1009 aa).

In terms of domain architecture, FERM spans Arg39–Lys359. Phosphoserine is present on residues Ser361, Ser375, and Ser399. Position 402 is a phosphotyrosine; by autocatalysis (Tyr402). One can recognise a Protein kinase domain in the interval Val425 to Tyr683. Residues Leu431–Val439, Lys457, and Glu503–Glu509 contribute to the ATP site. The active-site Proton acceptor is the Asp549. The residue at position 579 (Tyr579) is a Phosphotyrosine. At Tyr580 the chain carries Phosphotyrosine; by SRC, FYN and LCK. Residues Asn696 to Thr728 form a disordered region. The segment covering Glu712–Gln727 has biased composition (pro residues). Tyr722 is modified (phosphotyrosine). Ser762 is subject to Phosphoserine. Thr765 bears the Phosphothreonine mark. An interaction with TGFB1I1 region spans residues Lys801–Glu1009. Phosphotyrosine is present on Tyr834. Phosphoserine is present on Ser839. Thr842 carries the post-translational modification Phosphothreonine. Tyr849 is modified (phosphotyrosine). Ser866 carries the phosphoserine modification. Positions Gln868–Glu1009 are focal adhesion targeting (FAT). Residue Tyr881 is modified to Phosphotyrosine.

The protein belongs to the protein kinase superfamily. Tyr protein kinase family. FAK subfamily. Homodimer, or homooligomer. Interacts with KCNA2. Interacts with NPHP1, ASAP1, ASAP2, ARHGAP26, SKAP2 and TGFB1I1. The Tyr-402 phosphorylated form interacts with SRC (via SH2 domain) and SRC family members. Forms a signaling complex with EPHA1, LCK and phosphatidylinositol 3-kinase; upon activation by EFNA1. Interacts with GRB2 (via SH2 domain). Interacts with P53/TP53 and MDM2. Interacts with MYLK. Interacts with BCAR1. Interacts with RB1CC1. Interacts with RHOU. Interacts with VAV1. Interacts with PDPK1. Interacts with DLG4. Interacts with LPXN and PTPN12. Interacts with SIRPA and SH2D3C. Interacts (hypophosphorylated) with PXN. Interacts with ARHGAP10. Post-translationally, phosphorylated on tyrosine residues in response to various stimuli that elevate the intracellular calcium concentration; this activation is indirect and may be mediated by production of reactive oxygen species (ROS). Tyr-402 is the major autophosphorylation site, but other kinases can also phosphorylate Tyr-402. Autophosphorylation occurs in trans, i.e. one subunit of the dimeric receptor phosphorylates tyrosine residues on the other subunit. Phosphorylation at Tyr-402 promotes interaction with SRC and SRC family members, leading to phosphorylation at Tyr-579; Tyr-580 and Tyr-881. Phosphorylation at Tyr-881 is important for interaction with GRB2. Phosphorylated on tyrosine residues upon activation of FGR and PKC. Recruitment by NPHP1 to cell matrix adhesions initiates Tyr-402 phosphorylation. In monocytes, adherence to substrata is required for tyrosine phosphorylation and kinase activation. Angiotensin II, thapsigargin and L-alpha-lysophosphatidic acid (LPA) also induce autophosphorylation and increase kinase activity. Phosphorylation by MYLK promotes ITGB2 activation and is thus essential to trigger neutrophil transmigration during lung injury. Dephosphorylated by PTPN12.

Its subcellular location is the cytoplasm. It is found in the perinuclear region. The protein resides in the cell membrane. The protein localises to the cell junction. It localises to the focal adhesion. Its subcellular location is the cell projection. It is found in the lamellipodium. The protein resides in the cell cortex. The protein localises to the nucleus. The enzyme catalyses L-tyrosyl-[protein] + ATP = O-phospho-L-tyrosyl-[protein] + ADP + H(+). Activated in response to stimuli that lead to increased intracellular Ca(2+) levels; this activation is indirect and may be mediated by calcium-mediated production of reactive oxygen species (ROS). Activated by autophosphorylation at Tyr-402; this creates a binding site for SRC family kinases and leads to phosphorylation at additional tyrosine residues. Phosphorylation at Tyr-402, Tyr-579 and Tyr-580 is required for optimal kinase activity. Non-receptor protein-tyrosine kinase that regulates reorganization of the actin cytoskeleton, cell polarization, cell migration, adhesion, spreading and bone remodeling. Plays a role in the regulation of the humoral immune response, and is required for normal levels of marginal B-cells in the spleen and normal migration of splenic B-cells. Required for normal macrophage polarization and migration towards sites of inflammation. Regulates cytoskeleton rearrangement and cell spreading in T-cells, and contributes to the regulation of T-cell responses. Promotes osteoclastic bone resorption; this requires both PTK2B/PYK2 and SRC. May inhibit differentiation and activity of osteoprogenitor cells. Functions in signaling downstream of integrin and collagen receptors, immune receptors, G-protein coupled receptors (GPCR), cytokine, chemokine and growth factor receptors, and mediates responses to cellular stress. Forms multisubunit signaling complexes with SRC and SRC family members upon activation; this leads to the phosphorylation of additional tyrosine residues, creating binding sites for scaffold proteins, effectors and substrates. Regulates numerous signaling pathways. Promotes activation of phosphatidylinositol 3-kinase and of the AKT1 signaling cascade. Promotes activation of NOS3. Regulates production of the cellular messenger cGMP. Promotes activation of the MAP kinase signaling cascade, including activation of MAPK1/ERK2, MAPK3/ERK1 and MAPK8/JNK1. Promotes activation of Rho family GTPases, such as RHOA and RAC1. Recruits the ubiquitin ligase MDM2 to P53/TP53 in the nucleus, and thereby regulates P53/TP53 activity, P53/TP53 ubiquitination and proteasomal degradation. Acts as a scaffold, binding to both PDPK1 and SRC, thereby allowing SRC to phosphorylate PDPK1 at 'Tyr-9, 'Tyr-373', and 'Tyr-376'. Promotes phosphorylation of NMDA receptors by SRC family members, and thereby contributes to the regulation of NMDA receptor ion channel activity and intracellular Ca(2+) levels. May also regulate potassium ion transport by phosphorylation of potassium channel subunits. Phosphorylates SRC; this increases SRC kinase activity. Phosphorylates ASAP1, NPHP1, KCNA2 and SHC1. Promotes phosphorylation of ASAP2, RHOU and PXN; this requires both SRC and PTK2/PYK2. This is Protein-tyrosine kinase 2-beta (Ptk2b) from Mus musculus (Mouse).